The primary structure comprises 968 residues: RNA polymerase-associated protein RapA (968 aa).

The 170-residue stretch at 163–332 (EVGQRFAPRV…FARLRLLDPD (170 aa)) folds into the Helicase ATP-binding domain. Residue 176–183 (DEVGLGKT) participates in ATP binding. A DEAH box motif is present at residues 278-281 (DEAH). Residues 491 to 678 (RVDWLIDFLK…GTKARYQELK (188 aa)) form the Helicase C-terminal domain.

Belongs to the SNF2/RAD54 helicase family. RapA subfamily. In terms of assembly, interacts with the RNAP. Has a higher affinity for the core RNAP than for the holoenzyme. Its ATPase activity is stimulated by binding to RNAP.

Transcription regulator that activates transcription by stimulating RNA polymerase (RNAP) recycling in case of stress conditions such as supercoiled DNA or high salt concentrations. Probably acts by releasing the RNAP, when it is trapped or immobilized on tightly supercoiled DNA. Does not activate transcription on linear DNA. Probably not involved in DNA repair. In Shewanella pealeana (strain ATCC 700345 / ANG-SQ1), this protein is RNA polymerase-associated protein RapA.